The primary structure comprises 57 residues: Protein CgkB (57 aa).

This chain is Protein CgkB (cgkB), found in Pseudoalteromonas carrageenovora (Alteromonas carrageenovora).